Reading from the N-terminus, the 347-residue chain is L-Ala-D/L-amino acid epimerase (347 aa).

Residue 156-158 participates in substrate binding; sequence KLK. Mg(2+) contacts are provided by D183, E211, and D237. Residues K259 and 309-311 contribute to the substrate site; that span reads DID.

Belongs to the mandelate racemase/muconate lactonizing enzyme family. It depends on Mg(2+) as a cofactor.

Its function is as follows. Dipeptide epimerase with a broad substrate specificity. Catalyzes the epimerization of L-Ala-L-Ala, L-Ala-L-Ser, L-Ala-L-Thr, L-Ala-L-Met, L-Ala-L-Phe, L-Ala-L-Tyr, L-Gly-L-Asp, L-Val-L-Asp, L-Val-L-Glu and L-Val-L-Phe (in vitro). Can also catalyze the epimerization of L-Ala-L-Glu, but with lower efficiency. This Pedosphaera parvula (strain Ellin514) protein is L-Ala-D/L-amino acid epimerase.